The sequence spans 313 residues: Interferon-inducible double-stranded RNA-dependent protein kinase activator A (313 aa).

Residues 1–21 (MSQSRHRAAAPPMEREDSGTF) are disordered. Sufficient for self-association and interaction with TARBP2 regions lie at residues 1-103 (MSQS…KANA), 102-195 (NASI…FSNI), and 195-313 (ISPE…AERK). Ser18 is subject to Phosphoserine. DRBM domains follow at residues 34-101 (TPIQ…ILKA), 126-194 (NPIG…KFSN), and 240-308 (DYIQ…YLKI). 3 positions are modified to phosphoserine: Ser167, Ser246, and Ser287.

The protein belongs to the PRKRA family. As to quaternary structure, homodimer. Interacts with EIF2AK2/PKR through its DRBM domains. Interacts with DICER1, AGO2 and TARBP2. Also able to interact with dsRNA. Interacts with UBC9. Forms a complex with UBC9 and p53/TP53. Interacts with DUS2L (via DRBM domain). In terms of processing, phosphorylated at Ser-246 in unstressed cells and at Ser-287 in stressed cells. Phosphorylation at Ser-246 appears to be a prerequisite for subsequent phosphorylation at Ser-287. Phosphorylation at Ser-246 and Ser-287 are necessary for activation of EIF2AK2/PKR under conditions of stress.

It localises to the cytoplasm. The protein resides in the perinuclear region. Its function is as follows. Activates EIF2AK2/PKR in the absence of double-stranded RNA (dsRNA), leading to phosphorylation of EIF2S1/EFI2-alpha and inhibition of translation and induction of apoptosis. Required for siRNA production by DICER1 and for subsequent siRNA-mediated post-transcriptional gene silencing. Does not seem to be required for processing of pre-miRNA to miRNA by DICER1. Promotes UBC9-p53/TP53 association and sumoylation and phosphorylation of p53/TP53 at 'Lys-386' at 'Ser-392' respectively and enhances its activity in a EIF2AK2/PKR-dependent manner. The chain is Interferon-inducible double-stranded RNA-dependent protein kinase activator A (PRKRA) from Bos taurus (Bovine).